A 513-amino-acid polypeptide reads, in one-letter code: Cyclin-dependent kinase C-2 (513 aa).

Residues 26–325 (FEKLEQIGEG…AKDALDAEYF (300 aa)) form the Protein kinase domain. ATP is bound by residues 32 to 40 (IGEGTYGQV) and K55. At Y37 the chain carries Phosphotyrosine. The Proton acceptor role is filled by D164. T198 carries the post-translational modification Phosphothreonine. A disordered region spans residues 337 to 513 (LPTYESSHEF…ARNQQYGWQP (177 aa)). The segment covering 395 to 404 (AGPNHPMNNN) has biased composition (low complexity). Polar residues predominate over residues 434–448 (SGNQTGGYNNQSRGG). Gly residues-rich tracts occupy residues 461–476 (APYG…GYGV) and 483–496 (QGGG…GSGR).

This sequence belongs to the protein kinase superfamily. CMGC Ser/Thr protein kinase family. CDC2/CDKX subfamily. Interacts with CYCT1-3. Highly expressed in flowers. Expressed in seedlings, roots, rosettes and stems.

The catalysed reaction is L-seryl-[protein] + ATP = O-phospho-L-seryl-[protein] + ADP + H(+). It carries out the reaction L-threonyl-[protein] + ATP = O-phospho-L-threonyl-[protein] + ADP + H(+). It catalyses the reaction [DNA-directed RNA polymerase] + ATP = phospho-[DNA-directed RNA polymerase] + ADP + H(+). This chain is Cyclin-dependent kinase C-2 (CDKC-2), found in Arabidopsis thaliana (Mouse-ear cress).